A 364-amino-acid chain; its full sequence is Selection and upkeep of intraepithelial T-cells protein 11 (364 aa).

The N-terminal stretch at 1–28 is a signal peptide; the sequence is MEPSASCLPGFFMVCILLKITVLTQVMS. In terms of domain architecture, Ig-like V-type spans 29-118; it reads LDIQINTQIP…TNQEKRRSII (90 aa). Over 29-138 the chain is Extracellular; that stretch reads LDIQINTQIP…MSLMSNNLLY (110 aa). The cysteines at positions 48 and 102 are disulfide-linked. Residues 139-159 traverse the membrane as a helical segment; the sequence is LGIYLIFILFLNFLKGILFCL. The Cytoplasmic segment spans residues 160-186; the sequence is TKRLVHFRKRMIKIKKVWSNKTRACCP. A helical transmembrane segment spans residues 187-207; it reads LIWEFLEIVLFIAFLPLYLMF. Over 208–230 the chain is Extracellular; that stretch reads RIRVFTLDEAHILYNNWLWKVCK. A helical transmembrane segment spans residues 231-251; it reads TLIAMMILFTVLILFLLWTLN. Residues 252–364 are Cytoplasmic-facing; sequence RYGKMPCLSS…LYSKLGNLTH (113 aa).

This sequence belongs to the SKINT family. As to expression, expressed in skin and thymus.

It localises to the membrane. Functionally, may act by engaging a cell surface molecule on immature T-cells in the embryonic thymus. The protein is Selection and upkeep of intraepithelial T-cells protein 11 (Skint11) of Mus musculus (Mouse).